The sequence spans 202 residues: Ribosome biogenesis regulatory protein homolog (202 aa).

Residues 82–103 (TLPPPTTPLPREKPVPQPKPET) form a disordered region.

It belongs to the RRS1 family. In terms of assembly, component of a hexameric 5S RNP precursor complex, composed of 5S RNA, RRS1, RPF2, RPL5, RPL11 and SYO1; this complex acts as a precursor for ribosome assembly.

It localises to the nucleus. In terms of biological role, involved in ribosomal large subunit assembly. In Chaetomium thermophilum (strain DSM 1495 / CBS 144.50 / IMI 039719) (Thermochaetoides thermophila), this protein is Ribosome biogenesis regulatory protein homolog.